Here is a 149-residue protein sequence, read N- to C-terminus: Large ribosomal subunit protein bL9 (149 aa).

The protein belongs to the bacterial ribosomal protein bL9 family.

Binds to the 23S rRNA. This chain is Large ribosomal subunit protein bL9, found in Leptospira borgpetersenii serovar Hardjo-bovis (strain JB197).